Reading from the N-terminus, the 1663-residue chain is Cortactin-binding protein 2 (1663 aa).

Disordered stretches follow at residues 1–23 (MATDGASCEPDLSRAPEDAAGAA), 203–222 (KKKTNELEEELSTEKRRSTE), 359–440 (QASH…LHPG), 454–478 (GNANDPDQNGNTTQSPPSRDVSPTS), and 498–617 (RFTS…KPSI). A coiled-coil region spans residues 119–276 (KKMQERMSAQ…EQLKRGSDSK (158 aa)). Residues 386 to 396 (PSTGSTPDPTS) are compositionally biased toward low complexity. R498 is subject to Asymmetric dimethylarginine. Residues 583–593 (TVASPPSSLPQ) are compositionally biased toward polar residues. ANK repeat units follow at residues 709-739 (GRPTLLQQAAAQGNVTLLSMLLNEEGLDINY), 743-772 (DGHSALYSAAKNGHTDCVRLLLSAEAQVNA), 776-805 (NGFTPLCAAAAQGHFECVELLIAYDANINH), 809-838 (GGQTPLYLACKNGNKECVKLLLEAGTNRSV), 842-871 (DGWTPVHAAVDTGNVDSLKLLMYHRIPARG), and 912-942 (EGWTAAHIAASKGFKNCLEILCRHRGLEPER). The tract at residues 1446–1485 (NKKKGESGAWRKVNTSPRRKSGRFSLPTWNKPDLSTEGMK) is disordered. S1524 is modified (phosphoserine). The tract at residues 1580–1663 (SQKEVSPLSS…KNEHLEKPNK (84 aa)) is disordered. The span at 1582–1599 (KEVSPLSSHQTTECSNSK) shows a compositional bias: polar residues. Positions 1624-1638 (SQNTKRSSSSSNTRQ) are enriched in low complexity. Over residues 1645 to 1663 (SKEENWNLHKNEHLEKPNK) the composition is skewed to basic and acidic residues.

In terms of assembly, interacts with CTTN/cortactin SH3 domain. Interacts with STRN, STRN4/zinedin and MOB4/phocein; this interactions mediate the association with the STRIPAK core complex and may regulate dendritic spine distribution of the STRIPAK complex in hippocampal neurons. Activation of glutamate receptors weakens the interaction with STRN and STRN4.

Its subcellular location is the cytoplasm. The protein localises to the cell cortex. It is found in the cell projection. It localises to the dendritic spine. Regulates the dendritic spine distribution of CTTN/cortactin in hippocampal neurons, and thus controls dendritic spinogenesis and dendritic spine maintenance. Associates with the striatin-interacting phosphatase and kinase (STRIPAK) core complex to regulate dendritic spine distribution of the STRIPAK complex in hippocampal neurons. This chain is Cortactin-binding protein 2 (CTTNBP2), found in Pongo abelii (Sumatran orangutan).